The following is a 128-amino-acid chain: Lymphocyte antigen 6D (128 aa).

The first 20 residues, 1 to 20, serve as a signal peptide directing secretion; it reads MKTVLLFLVALAAAAGPAQA. The UPAR/Ly6 domain occupies 21-108; it reads LRCHVCTSSS…WQSAAPARTS (88 aa). 5 cysteine pairs are disulfide-bonded: Cys-23–Cys-45, Cys-26–Cys-32, Cys-38–Cys-63, Cys-67–Cys-86, and Cys-87–Cys-92. Residue Ser-98 is the site of GPI-anchor amidated serine attachment. A propeptide spans 99–128 (removed in mature form); it reads WQSAAPARTSAHLGLALACGLLALLWAPGL.

It localises to the cell membrane. In terms of biological role, may act as a specification marker at earliest stage specification of lymphocytes between B- and T-cell development. Marks the earliest stage of B-cell specification. This is Lymphocyte antigen 6D (LY6D) from Bos taurus (Bovine).